Consider the following 576-residue polypeptide: Proline--tRNA ligase (576 aa).

This sequence belongs to the class-II aminoacyl-tRNA synthetase family. ProS type 1 subfamily. In terms of assembly, homodimer.

The protein resides in the cytoplasm. It catalyses the reaction tRNA(Pro) + L-proline + ATP = L-prolyl-tRNA(Pro) + AMP + diphosphate. Catalyzes the attachment of proline to tRNA(Pro) in a two-step reaction: proline is first activated by ATP to form Pro-AMP and then transferred to the acceptor end of tRNA(Pro). As ProRS can inadvertently accommodate and process non-cognate amino acids such as alanine and cysteine, to avoid such errors it has two additional distinct editing activities against alanine. One activity is designated as 'pretransfer' editing and involves the tRNA(Pro)-independent hydrolysis of activated Ala-AMP. The other activity is designated 'posttransfer' editing and involves deacylation of mischarged Ala-tRNA(Pro). The misacylated Cys-tRNA(Pro) is not edited by ProRS. This Dechloromonas aromatica (strain RCB) protein is Proline--tRNA ligase.